A 389-amino-acid polypeptide reads, in one-letter code: Large envelope protein (389 aa).

M1 is subject to N-acetylmethionine. G2 carries the N-myristoyl glycine; by host lipid modification. The tract at residues 2 to 108 is pre-S1; sequence GQNLSTSNPL…PPLRTTHPQA (107 aa). The segment at 2 to 163 is pre-S; that stretch reads GQNLSTSNPL…FSRIGDPALN (162 aa). Topologically, residues 2-170 are virion surface; in external conformation; it reads GQNLSTSNPL…ALNMENITSG (169 aa). The Intravirion; in internal conformation segment spans residues 2-242; that stretch reads GQNLSTSNPL…PGYRWMCLRR (241 aa). The tract at residues 76-102 is disordered; that stretch reads TLPANPPPASTNRQSGRQPTPLSPPLR. The span at 85 to 95 shows a compositional bias: polar residues; sequence STNRQSGRQPT. Residues 109–163 form a pre-S2 region; it reads MHWNSTTFHQTLQDPRVRGLYFPAGGSSSGTVNPVPTTTSPISSIFSRIGDPALN. Residues 171–191 traverse the membrane as a helical segment; sequence FLGPLLVLQAGFFLLTRILTI. Residues 192 to 242 are Intravirion; in external conformation-facing; sequence PQSLDSWWTSLNFLGGTTVCLGQNSQSPISNHSPTSCPPTCPGYRWMCLRR. The chain crosses the membrane as a helical span at residues 243–263; it reads FIIFLFILLLCLIFLLVLLDY. The Virion surface portion of the chain corresponds to 264-337; the sequence is QGMLPVCPLI…WASARFSWLS (74 aa). Residue N309 is glycosylated (N-linked (GlcNAc...) asparagine; by host). A helical transmembrane segment spans residues 338-358; sequence LLVPFVQWFVGLSPIVWLSVI. Over 359 to 364 the chain is Intravirion; the sequence is WMMWYW. A helical membrane pass occupies residues 365-387; sequence GPSLYSILSPFLPLLPIFFCLWA. The Virion surface segment spans residues 388-389; sequence YI.

Belongs to the orthohepadnavirus major surface antigen family. As to quaternary structure, in its internal form (Li-HBsAg), interacts with the capsid protein and with the isoform S. Interacts with host chaperone CANX. Associates with host chaperone CANX through its pre-S2 N glycan; this association may be essential for isoform M proper secretion. In terms of assembly, interacts with isoform L. Interacts with the antigens of satellite virus HDV (HDVAgs); this interaction is required for encapsidation of HDV genomic RNA. Isoform M is N-terminally acetylated by host at a ratio of 90%, and N-glycosylated by host at the pre-S2 region. In terms of processing, myristoylated.

The protein resides in the virion membrane. Functionally, the large envelope protein exists in two topological conformations, one which is termed 'external' or Le-HBsAg and the other 'internal' or Li-HBsAg. In its external conformation the protein attaches the virus to cell receptors and thereby initiating infection. This interaction determines the species specificity and liver tropism. This attachment induces virion internalization predominantly through caveolin-mediated endocytosis. The large envelope protein also assures fusion between virion membrane and endosomal membrane. In its internal conformation the protein plays a role in virion morphogenesis and mediates the contact with the nucleocapsid like a matrix protein. Its function is as follows. The middle envelope protein plays an important role in the budding of the virion. It is involved in the induction of budding in a nucleocapsid independent way. In this process the majority of envelope proteins bud to form subviral lipoprotein particles of 22 nm of diameter that do not contain a nucleocapsid. The protein is Large envelope protein of Hepatitis B virus genotype D subtype adw (isolate United Kingdom/adyw/1979) (HBV-D).